The chain runs to 257 residues: uncharacterized protein (257 aa).

A helical membrane pass occupies residues 6–26 (IFWLNLAAIIIISIVVSGGMF).

Belongs to the staphylococcal tandem lipoprotein family.

Its subcellular location is the cell membrane. This is an uncharacterized protein from Staphylococcus aureus (strain N315).